The sequence spans 158 residues: Protein E6 (158 aa).

2 zinc fingers span residues 32–68 (CVYC…CHKC) and 105–141 (CLRC…CHSC). A PDZ-binding domain motif is present at residues 156-158 (TQV).

It belongs to the papillomaviridae E6 protein family. Forms homodimers. Interacts with ubiquitin-protein ligase UBE3A/E6-AP and thus forms a complex with human TP53. Interacts with human NFX1 and MAGI3. Interacts with human IRF3; this interaction inhibits the establishment of antiviral state. Interacts with human TYK2; this interaction inhibits JAK-STAT activation by interferon alpha. Interacts with host DLG1; this interaction leads to the proteasomal degradation of DLG1.

The protein resides in the host cytoplasm. The protein localises to the host nucleus. In terms of biological role, plays a major role in the induction and maintenance of cellular transformation. Acts mainly as an oncoprotein by stimulating the destruction of many host cell key regulatory proteins. E6 associates with host UBE3A/E6-AP ubiquitin-protein ligase, and inactivates tumor suppressors TP53 and TP73 by targeting them to the 26S proteasome for degradation. In turn, DNA damage and chromosomal instabilities increase and lead to cell proliferation and cancer development. The complex E6/E6AP targets several other substrates to degradation via the proteasome including host DLG1 or NFX1, a repressor of human telomerase reverse transcriptase (hTERT). The resulting increased expression of hTERT prevents the shortening of telomere length leading to cell immortalization. Other cellular targets including BAK1, Fas-associated death domain-containing protein (FADD) and procaspase 8, are degraded by E6/E6AP causing inhibition of apoptosis. E6 also inhibits immune response by interacting with host IRF3 and TYK2. These interactions prevent IRF3 transcriptional activities and inhibit TYK2-mediated JAK-STAT activation by interferon alpha resulting in inhibition of the interferon signaling pathway. In Homo sapiens (Human), this protein is Protein E6.